A 540-amino-acid chain; its full sequence is MSSEKVKRVEADATDLLASLSIDKSGEKLEEIKKGSTPDPSDLLGGLSLKEGDSKKPEEKKEVVEEPENKEINDDKKDEDKKDESKDEVKDGDGAKEETKEEVKEESKEEPKEPKEPKEPATNLIKSSYEVKVKLADIQADPNSPLYSVKSFEELGLSPELLKGLYAMKFNKPSKIQEKALPLLLSNPPRNMIGQSQSGTGKTAAFSLTMLSRVDPTIKMPQCLCLSPTRELARQTLEVITTMGKFTNITTQLVVPNAIPRGSSVNAQVLVGTPGIAIDLIRRRQLNLSKMKVFVLDEADNMLEAQGLGDQAIRVKKALPRGVQLVLFSATFPTEVREYAERLVPDANSLELKQEELNVDGIKQLYMDCRSEQHKFEVLCELYGLLTIGSSIIFVEKKETADVLYGKMKKEGHTVSVLHGGLDNTDRDRLIDDFREGRSKVLITTNVLARGIDIASVSMVVNYDMPTDKYGKPDPSTYLHRIGRTGRFGRVGVSISFIHDRRSYDILMAIKAYFGNVEMTRVPTDDWDEVEKIVKKVIKS.

2 stretches are compositionally biased toward basic and acidic residues: residues 24-36 and 50-119; these read KSGE…KKGS and KEGD…EPKE. Positions 24-124 are disordered; sequence KSGEKLEEIK…KEPKEPATNL (101 aa). A Q motif motif is present at residues 150–178; sequence KSFEELGLSPELLKGLYAMKFNKPSKIQE. In terms of domain architecture, Helicase ATP-binding spans 183–350; it reads LLLSNPPRNM…ERLVPDANSL (168 aa). ATP is bound at residue 196–203; that stretch reads SQSGTGKT. The DEAD box motif lies at 297–300; the sequence is DEAD. The region spanning 361–538 is the Helicase C-terminal domain; that stretch reads GIKQLYMDCR…EVEKIVKKVI (178 aa).

This sequence belongs to the DEAD box helicase family. DDX19/DBP5 subfamily. As to quaternary structure, associates with the nuclear pore complex.

It localises to the cytoplasm. Its subcellular location is the nucleus. It is found in the nuclear pore complex. The protein resides in the nucleus membrane. The enzyme catalyses ATP + H2O = ADP + phosphate + H(+). Functionally, ATP-dependent RNA helicase associated with the nuclear pore complex and essential for mRNA export from the nucleus. May participate in a terminal step of mRNA export through the removal of proteins that accompany mRNA through the nucleopore complex. May also be involved in early transcription. This chain is ATP-dependent RNA helicase DBP5 (DBP5), found in Candida albicans (strain SC5314 / ATCC MYA-2876) (Yeast).